Here is a 487-residue protein sequence, read N- to C-terminus: Serine/threonine-protein kinase 4 (487 aa).

At M1 the chain carries N-acetylmethionine. T3 carries the phosphothreonine modification. The 252-residue stretch at 30-281 (FDVLEKLGEG…ATQLLQHPFV (252 aa)) folds into the Protein kinase domain. ATP-binding positions include 36 to 44 (LGEGSYGSV) and K59. D149 acts as the Proton acceptor in catalysis. T183 is subject to Phosphothreonine; by autocatalysis. Residue S265 is modified to Phosphoserine. The stretch at 290–310 (LRDLINEAMDVKLKRQESQQR) forms a coiled coil. Residues 303 to 312 (KRQESQQREV) show a composition bias toward basic and acidic residues. The interval 303–332 (KRQESQQREVDQDDEENSEEDEMDSGTMVR) is disordered. Over residues 313–326 (DQDDEENSEEDEMD) the composition is skewed to acidic residues. S320 carries the phosphoserine modification. Phosphothreonine occurs at positions 340 and 367. T387 is modified (phosphothreonine; by PKB/AKT1). Phosphoserine is present on residues S410 and S414. Residue Y433 is modified to Phosphotyrosine. Residues 433-480 (YEFLKSWTVEDLQKRLLALDPMMEQEIEEIRQKYQSKRQPILDAIEAK) enclose the SARAH domain.

This sequence belongs to the protein kinase superfamily. STE Ser/Thr protein kinase family. STE20 subfamily. Homodimer; mediated via the coiled-coil region. Interacts with NORE1, which inhibits autoactivation. Interacts with and stabilizes SAV1. Interacts with RASSF1. Interacts with FOXO3. Interacts with RASSF2 (via SARAH domain). Interacts with AR, PKB/AKT1, TNNI3 and SIRT1. Interacts with DLG5 (via PDZ domain 3). Interacts with MARK3 and SCRIB in the presence of DLG5. Requires Mg(2+) as cofactor. Autophosphorylated on serine and threonine residues. Phosphorylation at Thr-387 by PKB/AKT1, leads to inhibition of its: kinase activity, nuclear translocation and autophosphorylation at Thr-183. It also diminishes its cleavage by caspases and its ability to phosphorylate FOXO3. In terms of processing, proteolytically cleaved by caspase-3 during apoptosis at Asp-326 and Asp-349 resulting in a 37 kDa or a 39 kDa subunit respectively. The 39 kDa subunit is further cleaved into the 37 kDa form. Proteolytic cleavage results in kinase activation and nuclear translocation of the truncated form (MST1/N). It is less likely that cleavage at Asp-349 is a prerequisite for activation as this site is not conserved in the murine ortholog.

It localises to the cytoplasm. Its subcellular location is the nucleus. It catalyses the reaction L-seryl-[protein] + ATP = O-phospho-L-seryl-[protein] + ADP + H(+). The enzyme catalyses L-threonyl-[protein] + ATP = O-phospho-L-threonyl-[protein] + ADP + H(+). Inhibited by the C-terminal non-catalytic region. Activated by caspase-cleavage. Full activation also requires homodimerization and autophosphorylation of Thr-183. Activated by RASSF1 which acts by preventing its dephosphorylation. In terms of biological role, stress-activated, pro-apoptotic kinase which, following caspase-cleavage, enters the nucleus and induces chromatin condensation followed by internucleosomal DNA fragmentation. Key component of the Hippo signaling pathway which plays a pivotal role in organ size control and tumor suppression by restricting proliferation and promoting apoptosis. The core of this pathway is composed of a kinase cascade wherein STK3/MST2 and STK4/MST1, in complex with its regulatory protein SAV1, phosphorylates and activates LATS1/2 in complex with its regulatory protein MOB1, which in turn phosphorylates and inactivates YAP1 oncoprotein and WWTR1/TAZ. Phosphorylation of YAP1 by LATS2 inhibits its translocation into the nucleus to regulate cellular genes important for cell proliferation, cell death, and cell migration. STK3/MST2 and STK4/MST1 are required to repress proliferation of mature hepatocytes, to prevent activation of facultative adult liver stem cells (oval cells), and to inhibit tumor formation. Phosphorylates 'Ser-14' of histone H2B (H2BS14ph) during apoptosis. Phosphorylates FOXO3 upon oxidative stress, which results in its nuclear translocation and cell death initiation. Phosphorylates MOBKL1A, MOBKL1B and RASSF2. Phosphorylates TNNI3 (cardiac Tn-I) and alters its binding affinity to TNNC1 (cardiac Tn-C) and TNNT2 (cardiac Tn-T). Phosphorylates FOXO1 on 'Ser-212' and regulates its activation and stimulates transcription of PMAIP1 in a FOXO1-dependent manner. Phosphorylates SIRT1 and inhibits SIRT1-mediated p53/TP53 deacetylation, thereby promoting p53/TP53 dependent transcription and apoptosis upon DNA damage. Acts as an inhibitor of PKB/AKT1. Phosphorylates AR on 'Ser-650' and suppresses its activity by intersecting with PKB/AKT1 signaling and antagonizing formation of AR-chromatin complexes. This Papio anubis (Olive baboon) protein is Serine/threonine-protein kinase 4 (STK4).